We begin with the raw amino-acid sequence, 140 residues long: Putative transmembrane protein 49 (140 aa).

2 consecutive transmembrane segments (helical) span residues 23-43 (LIMSAIAGVIAGAFGGGIGGV) and 93-110 (IAVHYIVLFLRLAYRYMY).

Its subcellular location is the host membrane. The polypeptide is Putative transmembrane protein 49 (SIFV0049) (Saccharolobus islandicus (Sulfolobus islandicus)).